A 360-amino-acid chain; its full sequence is Glutamate--cysteine ligase (360 aa).

The protein belongs to the glutamate--cysteine ligase type 2 family. YbdK subfamily.

It carries out the reaction L-cysteine + L-glutamate + ATP = gamma-L-glutamyl-L-cysteine + ADP + phosphate + H(+). In terms of biological role, catalyzes the synthesis of gamma-glutamylcysteine (gamma-GC), the main low-molecular-weight thiol compound instead of glutathione in halophilic archaea. The sequence is that of Glutamate--cysteine ligase from Halobacterium salinarum (strain ATCC 29341 / DSM 671 / R1).